Reading from the N-terminus, the 274-residue chain is NADPH-dependent 7-cyano-7-deazaguanine reductase (274 aa).

The tract at residues 1 to 33 (MPKKDALDHLSLGQHTDYPNEYDPKQLQPVPRS) is disordered. 84 to 86 (IES) serves as a coordination point for substrate. An NADPH-binding site is contributed by 86 to 87 (SK). Cysteine 183 acts as the Thioimide intermediate in catalysis. The active-site Proton donor is the aspartate 190. 222–223 (HE) provides a ligand contact to substrate. 250–251 (RG) provides a ligand contact to NADPH.

This sequence belongs to the GTP cyclohydrolase I family. QueF type 2 subfamily. As to quaternary structure, homodimer.

Its subcellular location is the cytoplasm. It catalyses the reaction 7-aminomethyl-7-carbaguanine + 2 NADP(+) = 7-cyano-7-deazaguanine + 2 NADPH + 3 H(+). Its pathway is tRNA modification; tRNA-queuosine biosynthesis. Functionally, catalyzes the NADPH-dependent reduction of 7-cyano-7-deazaguanine (preQ0) to 7-aminomethyl-7-deazaguanine (preQ1). In Idiomarina loihiensis (strain ATCC BAA-735 / DSM 15497 / L2-TR), this protein is NADPH-dependent 7-cyano-7-deazaguanine reductase.